Here is a 129-residue protein sequence, read N- to C-terminus: uncharacterized protein (129 aa).

2 C2H2-type zinc fingers span residues 75-99 and 101-124; these read FVCP…YTEH and KVCP…CKKH.

Essential for virus function. This is an uncharacterized protein from Saccharolobus solfataricus (Sulfolobus solfataricus).